The following is a 238-amino-acid chain: MAGVNVCIKCSMFIFNFVFWLCGAIILSVAISIRAGKIGQEILAPGDADLNLFIAVNILIFVGAVIMILGFLGCCGAMKENQFMMILFFVGLLMILLLQVAAGIVATTRKSKTEQALNKTLLINARLLSSTDENERVFQKAFSELQEELKCCGLVNGASDWGSNFQHYYRTCECPSESDSSCTKYSGKTIYKQSCFASISQMFSKRLFIVLALAFGLAAIEVLGLIFSIVLYCQMRKK.

Topologically, residues 1–9 (MAGVNVCIK) are cytoplasmic. A helical transmembrane segment spans residues 10-33 (CSMFIFNFVFWLCGAIILSVAISI). Over 34-57 (RAGKIGQEILAPGDADLNLFIAVN) the chain is Extracellular. Residues 58-72 (ILIFVGAVIMILGFL) traverse the membrane as a helical segment. The Cytoplasmic segment spans residues 73–83 (GCCGAMKENQF). The helical transmembrane segment at 84 to 109 (MMILFFVGLLMILLLQVAAGIVATTR) threads the bilayer. Residues 110–206 (KSKTEQALNK…ASISQMFSKR (97 aa)) lie on the Extracellular side of the membrane. A glycan (N-linked (GlcNAc...) asparagine) is linked at Asn118. The chain crosses the membrane as a helical span at residues 207–231 (LFIVLALAFGLAAIEVLGLIFSIVL). Topologically, residues 232 to 238 (YCQMRKK) are cytoplasmic.

The protein belongs to the tetraspanin (TM4SF) family. In terms of assembly, forms homooligomers. Interacts with MEP1B. Interacts with integrin alpha3/ITGA3. Interacts with RICTOR and MTOR. Interacts with ADAM17. Interacts with ECE1.

It localises to the cell membrane. In terms of biological role, structural component of specialized membrane microdomains known as tetraspanin-enriched microdomains (TERMs), which act as platforms for receptor clustering and signaling. Participates thereby in diverse biological functions such as cell signal transduction, migration and protein trafficking. Promotes ADAM17-mediated TNF-alpha processing through recruitment of ADAM17 to tetraspanin-enriched micro-domains (TEMs). Forms a complex with RICTOR and integrin alpha3/ITGA3 to mediate mTORC2 activation and AKT1 phosphorylation leading to cell migration. Reduces apoptosis and autophagy induced by high glucose levels through forming a complex with mTOR and RICTOR. Contributes to the maintenance of intestinal epithelial barrier and plays a role in the regulation of intestine inflammation by switching interferon gamma receptor 1/IFNGR1 from clathrin-dependent to lipid raft-dependent endocytosis route to limit STAT1 activation magnitude and duration. Acts as a modulator of the endothelin axis by associating with endothelin converting enzyme ECE1 and regulating its activity of conversion of the endothelin-1 precursor to endothelin. The polypeptide is Tetraspanin-8 (TSPAN8) (Bos taurus (Bovine)).